The chain runs to 216 residues: Pyridoxine/pyridoxamine 5'-phosphate oxidase 1 (216 aa).

Substrate contacts are provided by residues 10–13 and Lys68; that span reads RREY. FMN contacts are provided by residues 63–68, 78–79, Lys85, and Gln107; these read RIVLLK and YT. Residues Tyr125, Arg129, and Ser133 each contribute to the substrate site. FMN is bound by residues 142-143 and Trp186; that span reads QS. Substrate is bound at residue 192–194; the sequence is RLH. Arg196 contacts FMN.

Belongs to the pyridoxamine 5'-phosphate oxidase family. Homodimer. The cofactor is FMN.

The enzyme catalyses pyridoxamine 5'-phosphate + O2 + H2O = pyridoxal 5'-phosphate + H2O2 + NH4(+). It carries out the reaction pyridoxine 5'-phosphate + O2 = pyridoxal 5'-phosphate + H2O2. It participates in cofactor metabolism; pyridoxal 5'-phosphate salvage; pyridoxal 5'-phosphate from pyridoxamine 5'-phosphate: step 1/1. Its pathway is cofactor metabolism; pyridoxal 5'-phosphate salvage; pyridoxal 5'-phosphate from pyridoxine 5'-phosphate: step 1/1. Functionally, catalyzes the oxidation of either pyridoxine 5'-phosphate (PNP) or pyridoxamine 5'-phosphate (PMP) into pyridoxal 5'-phosphate (PLP). The polypeptide is Pyridoxine/pyridoxamine 5'-phosphate oxidase 1 (Hydrogenovibrio crunogenus (strain DSM 25203 / XCL-2) (Thiomicrospira crunogena)).